The following is a 665-amino-acid chain: DNA mismatch repair protein MutL (665 aa).

Composition is skewed to polar residues over residues 348–361 (LEAT…NGLS) and 407–421 (PSSQ…NSRY). Disordered stretches follow at residues 348-370 (LEAT…AEEG) and 385-445 (VHRG…STSA). Positions 426 to 445 (YSTNAASTNTASNYSHSTSA) are enriched in low complexity.

This sequence belongs to the DNA mismatch repair MutL/HexB family.

Functionally, this protein is involved in the repair of mismatches in DNA. It is required for dam-dependent methyl-directed DNA mismatch repair. May act as a 'molecular matchmaker', a protein that promotes the formation of a stable complex between two or more DNA-binding proteins in an ATP-dependent manner without itself being part of a final effector complex. The chain is DNA mismatch repair protein MutL from Shewanella denitrificans (strain OS217 / ATCC BAA-1090 / DSM 15013).